Here is a 275-residue protein sequence, read N- to C-terminus: Ribosomal RNA small subunit methyltransferase A (275 aa).

The S-adenosyl-L-methionine site is built by Asn28, Leu30, Gly55, Glu77, Asp103, and Asn123.

The protein belongs to the class I-like SAM-binding methyltransferase superfamily. rRNA adenine N(6)-methyltransferase family. RsmA subfamily.

The protein resides in the cytoplasm. The enzyme catalyses adenosine(1518)/adenosine(1519) in 16S rRNA + 4 S-adenosyl-L-methionine = N(6)-dimethyladenosine(1518)/N(6)-dimethyladenosine(1519) in 16S rRNA + 4 S-adenosyl-L-homocysteine + 4 H(+). In terms of biological role, specifically dimethylates two adjacent adenosines (A1518 and A1519) in the loop of a conserved hairpin near the 3'-end of 16S rRNA in the 30S particle. May play a critical role in biogenesis of 30S subunits. In Rhizobium etli (strain CIAT 652), this protein is Ribosomal RNA small subunit methyltransferase A.